Here is an 81-residue protein sequence, read N- to C-terminus: MKPSGITFAFLVVFMMAIMYNSVQAAAIADADADAEAKAFADAFAEAGWGSIFKTVGKMIAKAAVKAAPEAISAMASQNEK.

An N-terminal signal peptide occupies residues 1-25; sequence MKPSGITFAFLVVFMMAIMYNSVQA. The propeptide occupies 26–47; it reads AAIADADADAEAKAFADAFAEA.

This sequence belongs to the formicidae venom precursor-01 superfamily. Post-translationally, truncated sequences of this peptide have also been found in the venom. It is possible they have been cleaved in the venom. As to expression, expressed by the venom gland.

Its subcellular location is the secreted. Cationic amphipathic alpha-helical peptide with antimicrobial activities against E.coli (MIC=6.2 uM), S.aureus (MIC=6.2 uM), and S.cerevisiae (MIC=50 uM). Also shows histamine-releasing activity (30.1% at 10 uM) and a weak hemolytic activity (10.4% at 50 uM). The polypeptide is U-poneritoxin(01)-Om2a (Odontomachus monticola (Trap-jaw ant)).